We begin with the raw amino-acid sequence, 223 residues long: Cuticular glutathione peroxidase (223 aa).

Residues 1–19 form the signal peptide; sequence MSAQLLILSHMVLLQLIVA. N-linked (GlcNAc...) asparagine glycosylation is present at asparagine 39. The active site involves cysteine 74. Asparagine 92 is a glycosylation site (N-linked (GlcNAc...) asparagine).

It belongs to the glutathione peroxidase family. As to quaternary structure, homotetramer.

It is found in the secreted. It carries out the reaction 2 glutathione + H2O2 = glutathione disulfide + 2 H2O. In terms of biological role, could inhibit the oxidative burst of leukocytes and neutralize the secondary products of lipid peroxidation, thus providing the resistance of these parasites to immune effector mechanisms and their persistence in the mammalian host. It may also be involved in the formation of cross-linking residues such as dityrosine, trityrosine and isotrityrosine identified in cuticular collagen. Highly cross-linked external cortex may also serve to protect the parasite from immune attack. The chain is Cuticular glutathione peroxidase from Brugia malayi (Filarial nematode worm).